The primary structure comprises 124 residues: UPF0231 protein Shewana3_0655 (124 aa).

Belongs to the UPF0231 family.

This Shewanella sp. (strain ANA-3) protein is UPF0231 protein Shewana3_0655.